A 496-amino-acid chain; its full sequence is Glycerol kinase (496 aa).

Position 12 (Thr-12) interacts with ADP. Positions 12, 13, and 14 each coordinate ATP. Thr-12 lines the sn-glycerol 3-phosphate pocket. Position 16 (Arg-16) interacts with ADP. Residues Arg-82, Glu-83, and Tyr-134 each coordinate sn-glycerol 3-phosphate. Residues Arg-82, Glu-83, and Tyr-134 each contribute to the glycerol site. A Phosphohistidine; by HPr modification is found at His-230. Asp-244 lines the sn-glycerol 3-phosphate pocket. Residues Asp-244 and Gln-245 each contribute to the glycerol site. Positions 266 and 309 each coordinate ADP. 4 residues coordinate ATP: Thr-266, Gly-309, Gln-313, and Gly-410. Residues Gly-410 and Asn-414 each contribute to the ADP site.

It belongs to the FGGY kinase family. Post-translationally, the phosphoenolpyruvate-dependent sugar phosphotransferase system (PTS), including enzyme I, and histidine-containing protein (HPr) are required for the phosphorylation of, which leads to the activation of the enzyme.

The catalysed reaction is glycerol + ATP = sn-glycerol 3-phosphate + ADP + H(+). It functions in the pathway polyol metabolism; glycerol degradation via glycerol kinase pathway; sn-glycerol 3-phosphate from glycerol: step 1/1. Inhibited by fructose 1,6-bisphosphate and p-chloromercuribenzoate (PCMB). In terms of biological role, key enzyme in the regulation of glycerol uptake and metabolism. Catalyzes the phosphorylation of glycerol to yield sn-glycerol 3-phosphate. This chain is Glycerol kinase, found in Thermus thermophilus.